The chain runs to 300 residues: tRNA pseudouridine synthase B (300 aa).

D41 functions as the Nucleophile in the catalytic mechanism.

Belongs to the pseudouridine synthase TruB family. Type 1 subfamily.

The catalysed reaction is uridine(55) in tRNA = pseudouridine(55) in tRNA. Its function is as follows. Responsible for synthesis of pseudouridine from uracil-55 in the psi GC loop of transfer RNAs. The chain is tRNA pseudouridine synthase B from Synechococcus sp. (strain WH7803).